We begin with the raw amino-acid sequence, 244 residues long: E3 ubiquitin-protein ligase RNF166 (244 aa).

Positions 10 to 30 (AQRPQAPGPGPPRPPPPAGPA) are disordered. The span at 15-28 (APGPGPPRPPPPAG) shows a compositional bias: pro residues. The RING-type zinc finger occupies 40 to 80 (CPICLEVFHRAVGIAGCGHTFCGECLQPCLQVPSPLCPLCR). Residues C105, C108, H120, and C124 each contribute to the Zn(2+) site. The C2HC RNF-type zinc-finger motif lies at 105-124 (CRGCSKKVTLAKMRSHVSSC). One can recognise a UIM domain in the interval 228–244 (DEEAALQAALALSLSEN).

It is found in the cytoplasm. It catalyses the reaction S-ubiquitinyl-[E2 ubiquitin-conjugating enzyme]-L-cysteine + [acceptor protein]-L-lysine = [E2 ubiquitin-conjugating enzyme]-L-cysteine + N(6)-ubiquitinyl-[acceptor protein]-L-lysine.. Its pathway is protein modification; protein ubiquitination. Its function is as follows. E3 ubiquitin-protein ligase that promotes the ubiquitination of different substrates. The chain is E3 ubiquitin-protein ligase RNF166 (RNF166) from Gallus gallus (Chicken).